A 583-amino-acid polypeptide reads, in one-letter code: uncharacterized protein (583 aa).

24-140 (ILADIDDEQL…SAMLRAMARM (117 aa)) serves as a coordination point for a nucleoside 3',5'-cyclic phosphate. Residues 309-469 (LVMAGGGARG…LNNLPANVMC (161 aa)) enclose the PNPLA domain. The GXGXXG signature appears at 313 to 318 (GGGARG). Positions 340–344 (GTSSG) match the GXSXG motif. Catalysis depends on serine 342, which acts as the Nucleophile. Aspartate 456 functions as the Proton acceptor in the catalytic mechanism. The short motif at 456 to 458 (DGG) is the DGA/G element.

Belongs to the NTE family.

This is an uncharacterized protein from Mycobacterium bovis (strain ATCC BAA-935 / AF2122/97).